A 397-amino-acid polypeptide reads, in one-letter code: 1-deoxy-D-xylulose 5-phosphate reductoisomerase (397 aa).

7 residues coordinate NADPH: serine 10, glycine 11, serine 12, isoleucine 13, alanine 36, arginine 37, and asparagine 124. Position 125 (lysine 125) interacts with 1-deoxy-D-xylulose 5-phosphate. Glutamate 126 contributes to the NADPH binding site. Aspartate 150 serves as a coordination point for Mn(2+). Residues serine 151, glutamate 152, serine 186, and histidine 209 each coordinate 1-deoxy-D-xylulose 5-phosphate. Glutamate 152 contacts Mn(2+). Residue glycine 215 coordinates NADPH. 1-deoxy-D-xylulose 5-phosphate-binding residues include serine 222, asparagine 227, lysine 228, and glutamate 231. Glutamate 231 contacts Mn(2+).

The protein belongs to the DXR family. Mg(2+) is required as a cofactor. The cofactor is Mn(2+).

The enzyme catalyses 2-C-methyl-D-erythritol 4-phosphate + NADP(+) = 1-deoxy-D-xylulose 5-phosphate + NADPH + H(+). It functions in the pathway isoprenoid biosynthesis; isopentenyl diphosphate biosynthesis via DXP pathway; isopentenyl diphosphate from 1-deoxy-D-xylulose 5-phosphate: step 1/6. Functionally, catalyzes the NADPH-dependent rearrangement and reduction of 1-deoxy-D-xylulose-5-phosphate (DXP) to 2-C-methyl-D-erythritol 4-phosphate (MEP). The sequence is that of 1-deoxy-D-xylulose 5-phosphate reductoisomerase from Aeromonas hydrophila subsp. hydrophila (strain ATCC 7966 / DSM 30187 / BCRC 13018 / CCUG 14551 / JCM 1027 / KCTC 2358 / NCIMB 9240 / NCTC 8049).